Consider the following 258-residue polypeptide: Alpha-fibrinogenase-like (258 aa).

The signal sequence occupies residues 1-18 (MVLIRVLANLLVLQLSYA). Residues 19–24 (QKSSEL) constitute a propeptide that is removed on maturation. In terms of domain architecture, Peptidase S1 spans 25 to 249 (VVGGHPCNIY…YTDWIHSIIA (225 aa)). Intrachain disulfides connect Cys31/Cys163, Cys50/Cys66, Cys98/Cys256, Cys142/Cys210, Cys174/Cys189, and Cys200/Cys225. Asn44 carries N-linked (GlcNAc...) asparagine glycosylation. Active-site charge relay system residues include His65 and Asp110. The active-site Charge relay system is Ser204.

This sequence belongs to the peptidase S1 family. Snake venom subfamily. As to quaternary structure, monomer. As to expression, expressed by the venom gland.

Its subcellular location is the secreted. Functionally, degrades alpha chain of fibrinogen (FGA), and has strong caseinolytic activity. Cleaves oxidized insulin B-chain at '40-Tyr-|-Leu-41', '48-Phe-|-Phe-49' and '49-Phe-|-Tyr-50', and glucagon at the bonds '62-Tyr-|-Ser-63', 66-Leu-|-Asp-67' and '78-Leu-|-Met-79' bonds. This chain is Alpha-fibrinogenase-like, found in Daboia siamensis (Eastern Russel's viper).